Reading from the N-terminus, the 248-residue chain is Probable N-acetylglucosaminyl-phosphatidylinositol de-N-acetylase (248 aa).

Residues 1-7 (MIWFWST) lie on the Lumenal side of the membrane. The helical transmembrane segment at 8–24 (LLVTAIAVLSTANESSS) threads the bilayer. Topologically, residues 25–248 (GQEKLAVESI…MSNNVLKRAT (224 aa)) are cytoplasmic.

Belongs to the PIGL family.

The protein localises to the endoplasmic reticulum membrane. The catalysed reaction is a 6-(N-acetyl-alpha-D-glucosaminyl)-1-(1,2-diacyl-sn-glycero-3-phospho)-1D-myo-inositol + H2O = a 6-(alpha-D-glucosaminyl)-1-(1,2-diacyl-sn-glycero-3-phospho)-1D-myo-inositol + acetate. The protein operates within glycolipid biosynthesis; glycosylphosphatidylinositol-anchor biosynthesis. Its function is as follows. Involved in the second step of GPI biosynthesis. De-N-acetylation of N-acetylglucosaminyl-phosphatidylinositol. The polypeptide is Probable N-acetylglucosaminyl-phosphatidylinositol de-N-acetylase (gpi12) (Schizosaccharomyces pombe (strain 972 / ATCC 24843) (Fission yeast)).